Reading from the N-terminus, the 520-residue chain is Phospholipase C A (520 aa).

A signal peptide (tat-type signal) is located at residues 1-38 (MSASPLLGMSRREFLTKLTGAGAAAFLMDWAAPVIEKA).

It belongs to the bacterial phospholipase C family. In terms of processing, predicted to be exported by the Tat system. The position of the signal peptide cleavage has not been experimentally proven.

The protein resides in the secreted. The protein localises to the cell wall. It catalyses the reaction a 1,2-diacyl-sn-glycero-3-phosphocholine + H2O = phosphocholine + a 1,2-diacyl-sn-glycerol + H(+). Involved in virulence. Induces cytotoxic effects on mouse macrophage cell lines, via direct or indirect enzymatic hydrolysis of cell membrane phospholipids. Hydrolyzes phosphatidylcholine. This is Phospholipase C A from Mycobacterium tuberculosis (strain CDC 1551 / Oshkosh).